The primary structure comprises 467 residues: PYAKMGYWDPDYVVKDTDVLALFRVSPQPGVDPVEASAAVAGESSTATWTVVWTDLLTACDLYRAKAYKVDAVPNTTDQYFAYIAYDIDLFEEGSIANLTASIXGXVFGFKALKALRLEDMRLPVAYLKTFQGPATGVICERERMDKFGRPFLGATVKPKLGLSGKNYGRVVYEGLKGGLDFLKDDENINSQPFMRWKERYLYSMEGVNRAIAAAGETKGHYLNVTAATMEQIYERAEFAKQLGSIIVMVDLVIGYTAIQSMAIWARKNDMILHLHRAGNSTYSRQKIHGMNFRVICKWMRMAGVDHIHAGTVVGKLEGDPVXXXXXXXXXXXXXXXXNLPQGIFFEQDWASLRKVTPVASGGIHCGQMHQLLDYLGVDVVLQFGGGTIGHPDGIQAGATANRVALESMVIARNEGRDFVAEGPQILQDAAKTCGPLQTALDLWKDISFNYTSTDTADLVETPTANV.

Positions 106 and 156 each coordinate substrate. Lys158 functions as the Proton acceptor in the catalytic mechanism. Residue Lys160 participates in substrate binding. Positions 184, 186, and 187 each coordinate Mg(2+). An N6-carboxylysine modification is found at Lys184. The active-site Proton acceptor is His276. Substrate is bound by residues Arg277, His309, and Ser361.

Belongs to the RuBisCO large chain family. Type I subfamily. As to quaternary structure, heterohexadecamer of 8 large chains and 8 small chains. Requires Mg(2+) as cofactor.

Its subcellular location is the plastid. The protein localises to the chloroplast. It catalyses the reaction 2 (2R)-3-phosphoglycerate + 2 H(+) = D-ribulose 1,5-bisphosphate + CO2 + H2O. The catalysed reaction is D-ribulose 1,5-bisphosphate + O2 = 2-phosphoglycolate + (2R)-3-phosphoglycerate + 2 H(+). Its function is as follows. RuBisCO catalyzes two reactions: the carboxylation of D-ribulose 1,5-bisphosphate, the primary event in carbon dioxide fixation, as well as the oxidative fragmentation of the pentose substrate in the photorespiration process. Both reactions occur simultaneously and in competition at the same active site. The polypeptide is Ribulose bisphosphate carboxylase large chain (rbcL) (Chondrus crispus (Carrageen Irish moss)).